The primary structure comprises 110 residues: Nucleotide-binding protein HI1146 homolog (110 aa).

It belongs to the RapZ-like family.

In terms of biological role, displays ATPase and GTPase activities. The protein is Nucleotide-binding protein HI1146 homolog of Aggregatibacter actinomycetemcomitans (Actinobacillus actinomycetemcomitans).